A 216-amino-acid chain; its full sequence is Corrinoid protein DSY3155 (216 aa).

Residues 1–90 (MIMSLLDELK…EIAKKGMSEG (90 aa)) enclose the B12-binding N-terminal domain. A B12-binding domain is found at 93-216 (KGKIVLGTVE…VELANKILGK (124 aa)). Position 106 (His-106) interacts with methylcob(III)alamin.

Belongs to the methylamine corrinoid protein family.

In terms of biological role, probably harbors a corrinoid prosthetic group and acts as a methyl group carrier between MtgB and MtgA. A methyl group from glycine betaine is likely first transferred to the corrinoid prosthetic group of the enzyme by MtgB, and then transferred to tetrahydrofolate (THF) by MtgA. The methyl group may then be ultimately converted to carbon dioxide, and its oxidation would also provide reducing equivalents for anaerobic respiration. Thus, may function in the pathway that allows anaerobic methylotrophic growth of D.hafniense using glycine betaine. This is Corrinoid protein DSY3155 from Desulfitobacterium hafniense (strain Y51).